The primary structure comprises 481 residues: OTU domain-containing protein 1 (481 aa).

Disordered stretches follow at residues 18–60 and 202–282; these read PTAA…AAAE and LAAA…IVSR. A compositionally biased stretch (low complexity) spans 38-58; it reads PPGAAGAAPEPETGECQPAAA. Positions 225–257 are enriched in basic and acidic residues; sequence GEEHLAERGPRGWERGGDRCDAPGGDAARRPDP. The segment covering 261-281 has biased composition (low complexity); that stretch reads APPAGSIEAAPSSAAEPVIVS. One can recognise an OTU domain in the interval 309–438; it reads KYRFHIIPDG…NGHYDAVFDH (130 aa). The interval 314-320 is cys-loop; the sequence is IIPDGNC. Aspartate 317 is a catalytic residue. The active-site Nucleophile is the cysteine 320. The tract at residues 369 to 379 is his-loop; the sequence is AAQDGAWAGYP. Residues 426–431 are variable-loop; that stretch reads WLSNGH. Residue histidine 431 is part of the active site. The UIM domain maps to 457–476; the sequence is KRDEELAKSMAISLSKMYIE.

It carries out the reaction Thiol-dependent hydrolysis of ester, thioester, amide, peptide and isopeptide bonds formed by the C-terminal Gly of ubiquitin (a 76-residue protein attached to proteins as an intracellular targeting signal).. Deubiquitinating enzyme that specifically hydrolyzes 'Lys-63'-linked polyubiquitin to monoubiquitin. Required for the stability and translation of a subset mRNAs with a high abundance of rare codons by mediating deubiquitination of 40S ribosomal protein RPS10/eS10, thereby antagonizing ZNF598-mediated 40S ubiquitination. The abundance of rare codons in mRNAs can limit the translation rate and can lead to ribosome collisions that trigger activation of ribosome quality control (RQC) pathway by ZNF598. OTUD1-mediated deubiquitination prevents activation of the RQC and subsequent dissociation of ribosomes and stimulates formation of polysomes and translation. The chain is OTU domain-containing protein 1 from Homo sapiens (Human).